The following is a 272-amino-acid chain: Shikimate dehydrogenase (NADP(+)) (272 aa).

Residues Ser14–Ser16 and Thr61 each bind shikimate. Lys65 acts as the Proton acceptor in catalysis. Glu77 is an NADP(+) binding site. The shikimate site is built by Asn86 and Asp102. Residues Gly126–Ala130, Asn149–Arg154, and Met213 contribute to the NADP(+) site. Tyr215 is a shikimate binding site. Residue Gly237 participates in NADP(+) binding.

It belongs to the shikimate dehydrogenase family. Homodimer.

The enzyme catalyses shikimate + NADP(+) = 3-dehydroshikimate + NADPH + H(+). Its pathway is metabolic intermediate biosynthesis; chorismate biosynthesis; chorismate from D-erythrose 4-phosphate and phosphoenolpyruvate: step 4/7. In terms of biological role, involved in the biosynthesis of the chorismate, which leads to the biosynthesis of aromatic amino acids. Catalyzes the reversible NADPH linked reduction of 3-dehydroshikimate (DHSA) to yield shikimate (SA). The polypeptide is Shikimate dehydrogenase (NADP(+)) (Escherichia coli O6:H1 (strain CFT073 / ATCC 700928 / UPEC)).